The primary structure comprises 212 residues: MQLFHLCLIISCSCPTVQASKLCLGWLWDMDIDPYKEFGATVQLLSFLPHDFFPSVRDLLDTASALFRDALESPEHCSPHHTALRQAILCWGELMTLATWVGANLQDPASRELVVTYVNINMGLKFRQLLWFHISCLTFGRETVIEYLVSFGVWIRTPQAYRPPNAPILSTLPETTVVRRRGRSPRRRTPSPRRRRSQSPRRRRSQSRESQC.

Residues 1 to 19 (MQLFHLCLIISCSCPTVQA) form the signal peptide. The segment at 25 to 27 (GWL) is HBEAG. The tract at residues 172-212 (LPETTVVRRRGRSPRRRTPSPRRRRSQSPRRRRSQSRESQC) is disordered. The segment covering 178 to 205 (VRRRGRSPRRRTPSPRRRRSQSPRRRRS) has biased composition (basic residues). One copy of the 1; half-length repeat lies at 184-190 (SPRRRTP). Positions 184 to 206 (SPRRRTPSPRRRRSQSPRRRRSQ) are 3 X 8 AA repeats of S-P-R-R-R-R-S-Q. Positions 184–212 (SPRRRTPSPRRRRSQSPRRRRSQSRESQC) are excised as a propeptide. 2 repeat units span residues 191 to 198 (SPRRRRSQ) and 199 to 206 (SPRRRRSQ).

The protein belongs to the orthohepadnavirus precore antigen family. Homodimerizes. In terms of processing, phosphorylated. Post-translationally, cleaved by host furin.

The protein resides in the secreted. Its subcellular location is the host nucleus. Its function is as follows. May regulate immune response to the intracellular capsid in acting as a T-cell tolerogen, by having an immunoregulatory effect which prevents destruction of infected cells by cytotoxic T-cells. This immune regulation may predispose to chronicity during perinatal infections and prevent severe liver injury during adult infections. This Hepatitis B virus genotype D (isolate Germany/1-91/1991) (HBV-D) protein is External core antigen.